We begin with the raw amino-acid sequence, 401 residues long: Ninja-family protein MODD (401 aa).

2 disordered regions span residues 95-135 (KQGV…GEGR) and 215-238 (TGNK…GLPP). Residues 105–130 (RPSGGAEAEPAAARLPASGSPSSGSS) are compositionally biased toward low complexity. Over residues 217–226 (NKKTGGNVNH) the composition is skewed to polar residues.

It belongs to the Ninja family. As to quaternary structure, interacts with BZIP46, TPR3 and PUB70.

It localises to the nucleus. In terms of biological role, acts as a negative regulator of abscisic acid (ABA) signaling and drought tolerance. Mediates deactivation and degradation of BZIP46, a positive regulator of ABA signaling and drought stress tolerance. Represses BZIP46 activity via interaction with the TPR3-HDAC1 corepressor complex and down-regulation of the histone acetylation level at BZIP46 target genes. Promotes BZIP46 degradation via interaction with the U-box type ubiquitin E3 ligase PUB70. This chain is Ninja-family protein MODD, found in Oryza sativa subsp. japonica (Rice).